The following is a 123-amino-acid chain: UPF0738 protein BCE_1319 (123 aa).

The protein belongs to the UPF0738 family.

The protein is UPF0738 protein BCE_1319 of Bacillus cereus (strain ATCC 10987 / NRS 248).